A 414-amino-acid chain; its full sequence is Enterobactin exporter EntS (414 aa).

Topologically, residues Met1–Ala21 are cytoplasmic. The helical transmembrane segment at Val22–Val42 threads the bilayer. The Periplasmic portion of the chain corresponds to Gln43–Gly55. Residues Leu56 to Ala76 traverse the membrane as a helical segment. The Cytoplasmic segment spans residues Asp77 to Lys83. The helical transmembrane segment at Val84 to Leu104 threads the bilayer. Residues Leu105–Ser109 are Periplasmic-facing. A helical transmembrane segment spans residues Leu110–Ala130. Residues Leu131–Arg156 are Cytoplasmic-facing. A helical transmembrane segment spans residues Leu157–Trp177. Residue Asn178 is a topological domain, periplasmic. A helical transmembrane segment spans residues Tyr179–Leu199. The Cytoplasmic segment spans residues Pro200–Arg218. A helical membrane pass occupies residues Phe219 to Ala239. Over Ser240–Ser256 the chain is Periplasmic. A helical transmembrane segment spans residues Ala257–Thr277. Residues Ser278–Pro287 are Cytoplasmic-facing. Residues Gly288 to Ile307 traverse the membrane as a helical segment. The Periplasmic portion of the chain corresponds to Met308–Ala313. A helical membrane pass occupies residues Gly314–Leu336. The Cytoplasmic portion of the chain corresponds to Gln337–Asn356. Residues Val357 to Val377 traverse the membrane as a helical segment. Position 378 (Ala378) is a topological domain, periplasmic. Residues Ser379–Gly399 traverse the membrane as a helical segment. The Cytoplasmic portion of the chain corresponds to Glu400 to Gly414.

It belongs to the major facilitator superfamily. EntS (TC 2.A.1.38) family.

It localises to the cell inner membrane. Functionally, component of an export pathway for enterobactin. In Salmonella typhimurium (strain LT2 / SGSC1412 / ATCC 700720), this protein is Enterobactin exporter EntS.